Here is a 1191-residue protein sequence, read N- to C-terminus: Roquin-2 (1191 aa).

The Zn(2+) site is built by Cys14, Cys17, Cys33, His35, Cys38, Cys50, and Asp53. The RING-type; degenerate zinc-finger motif lies at 14–54 (CPICYNEFDENVHKPISLGCSHTVCKTCLNKLHRKACPFDQ). The interval 91–170 (ENKHYEVAKK…RTVTELILQH (80 aa)) is HEPN-N. An ROQ region spans residues 171-325 (QNPQQLSANL…SIIDKLQSPE (155 aa)). Positions 326–396 (SFAKSVQELT…GLVDFIQNYS (71 aa)) are HEPN-C. The C3H1-type zinc finger occupies 410-438 (KYKTSMCRDLRQQGGCPRGTNCTFAHSQE). Disordered regions lie at residues 528–576 (GANG…NSVP) and 644–680 (ESSLPPASMPYADHYSTFSPRDRMNSSPYQPPPPQPY). Positions 530–546 (NGQNAAGPSADSVTENK) are enriched in polar residues. Phosphoserine is present on Ser549. A compositionally biased stretch (polar residues) spans 554–576 (PVSNVAATSAGPSNVGTELNSVP). A phosphoserine mark is found at Ser808, Ser983, and Ser1119.

As to quaternary structure, interacts with EDC4. Interacts with CCR4-NOT deadenylase complex. Interacts with MAP3K5; the interaction is probably stimulus-dependent. In terms of processing, proteolytically cleaved after Arg-509 and Arg-585 by MALT1 in activated CD4(+) T cells; cleavage at Arg-509 and Arg-585 is critical for promoting RC3H1 degradation in response to T-cell receptor (TCR) stimulation, and hence is necessary for prolonging the stability of a set of mRNAs controlling Th17 cell differentiation. In terms of tissue distribution, expressed in spleen, testis, ovary and small intestine.

Its subcellular location is the cytoplasm. It is found in the P-body. It catalyses the reaction S-ubiquitinyl-[E2 ubiquitin-conjugating enzyme]-L-cysteine + [acceptor protein]-L-lysine = [E2 ubiquitin-conjugating enzyme]-L-cysteine + N(6)-ubiquitinyl-[acceptor protein]-L-lysine.. Its pathway is protein modification; protein ubiquitination. Binding to dsRNA, but not CDE RNA, crosstalks with the E3 ubiquitin ligase activity and may inhibit ubiquitination. Its function is as follows. Post-transcriptional repressor of mRNAs containing a conserved stem loop motif, called constitutive decay element (CDE), which is often located in the 3'-UTR, as in HMGXB3, ICOS, IER3, NFKBID, NFKBIZ, PPP1R10, TNF and in many more mRNAs. Binds to CDE and promotes mRNA deadenylation and degradation. This process does not involve miRNAs. In follicular helper T (Tfh) cells, represses of ICOS and TNFRSF4 expression, thus preventing spontaneous Tfh cell differentiation, germinal center B-cell differentiation in the absence of immunization and autoimmunity. In resting or LPS-stimulated macrophages, controls inflammation by suppressing TNF expression. Also recognizes CDE in its own mRNA and in that of paralogous RC3H1, possibly leading to feedback loop regulation. miRNA-binding protein that regulates microRNA homeostasis. Enhances DICER-mediated processing of pre-MIR146a but reduces mature MIR146a levels through an increase of 3' end uridylation. Both inhibits ICOS mRNA expression and they may act together to exert the suppression. Acts as a ubiquitin E3 ligase. Pairs with E2 enzymes UBE2B, UBE2D2, UBE2E2, UBE2E3, UBE2G2, UBE2K and UBE2Q2 and produces polyubiquitin chains. Shows the strongest activity when paired with UBE2N:UBE2V1 or UBE2N:UBE2V2 E2 complexes and generate both short and long polyubiquitin chains. Involved in the ubiquitination of MAP3K5. Able to interact with double-stranded RNA (dsRNA). The sequence is that of Roquin-2 (RC3H2) from Homo sapiens (Human).